The sequence spans 225 residues: PKHD-type hydroxylase YbiX (225 aa).

The region spanning 78–177 (TLSTPLFNRY…RVASFMWIQS (100 aa)) is the Fe2OG dioxygenase domain. His96, Asp98, and His158 together coordinate Fe cation. Arg168 provides a ligand contact to 2-oxoglutarate.

Fe(2+) serves as cofactor. The cofactor is L-ascorbate.

The protein is PKHD-type hydroxylase YbiX of Escherichia coli O45:K1 (strain S88 / ExPEC).